The following is a 355-amino-acid chain: MTLRLADMTELLADKVQAELLGNSELLIERLSTLEAAGPNDLAFLSHPKYLGQLAQSAAGCVIVAPSAREAALKRGPCIVVDDPYYYFALVTQLWKRQHFPGAAPAIHASACIDPAAIISPHVSIGAFACIAAGAVIGEGARIAEHCVIGANAIVGANSRLSARVTVADDCRIGERCIIHPGAVIGADGFGFAPHDGQWVKIEQLGAVRIGNDVEIGANTCIDRGALQDTVIEDGVKLDNLVQIAHNVRVGRHSAMAGCAGVAGSATIGAHCTVGGGAIVLGHLRLADGVHVSAASIVTRSLLKPGHYTGLFPIDDNAAWEKNAATLKQLHALRERLKQTEKSLLQLQGSLEEKP.

H246 functions as the Proton acceptor in the catalytic mechanism.

This sequence belongs to the transferase hexapeptide repeat family. LpxD subfamily. In terms of assembly, homotrimer.

It catalyses the reaction a UDP-3-O-[(3R)-3-hydroxyacyl]-alpha-D-glucosamine + a (3R)-hydroxyacyl-[ACP] = a UDP-2-N,3-O-bis[(3R)-3-hydroxyacyl]-alpha-D-glucosamine + holo-[ACP] + H(+). It functions in the pathway bacterial outer membrane biogenesis; LPS lipid A biosynthesis. Its function is as follows. Catalyzes the N-acylation of UDP-3-O-acylglucosamine using 3-hydroxyacyl-ACP as the acyl donor. Is involved in the biosynthesis of lipid A, a phosphorylated glycolipid that anchors the lipopolysaccharide to the outer membrane of the cell. This chain is UDP-3-O-acylglucosamine N-acyltransferase, found in Polaromonas naphthalenivorans (strain CJ2).